Reading from the N-terminus, the 341-residue chain is Ribosomal RNA small subunit methyltransferase H (341 aa).

S-adenosyl-L-methionine contacts are provided by residues 47 to 49, Asp-64, Phe-91, Asp-109, and Gln-116; that span reads GGY.

It belongs to the methyltransferase superfamily. RsmH family.

Its subcellular location is the cytoplasm. It carries out the reaction cytidine(1402) in 16S rRNA + S-adenosyl-L-methionine = N(4)-methylcytidine(1402) in 16S rRNA + S-adenosyl-L-homocysteine + H(+). Specifically methylates the N4 position of cytidine in position 1402 (C1402) of 16S rRNA. This is Ribosomal RNA small subunit methyltransferase H from Agrobacterium fabrum (strain C58 / ATCC 33970) (Agrobacterium tumefaciens (strain C58)).